Consider the following 265-residue polypeptide: Undecaprenyl-diphosphatase (265 aa).

8 helical membrane passes run 1-21 (MDFLQSIILGIIQGITEFLPI), 39-59 (QGVGFDLAVHVGTLLAVILYF), 87-107 (WAVVVGTIPACIAGILLLDYI), 110-130 (ALRAVGVIITTTVVFAVLLAA), 144-164 (IGFKDAIIVGLAQAVALIPGT), 187-207 (FSFFMAIPITAAAALVKLLTI), 217-237 (LGFLVGGIVSFLTAITAIHFF), and 244-264 (FGMWPYVIYRLVLAVVLYLLF).

This sequence belongs to the UppP family.

The protein resides in the cell inner membrane. The catalysed reaction is di-trans,octa-cis-undecaprenyl diphosphate + H2O = di-trans,octa-cis-undecaprenyl phosphate + phosphate + H(+). Functionally, catalyzes the dephosphorylation of undecaprenyl diphosphate (UPP). Confers resistance to bacitracin. This is Undecaprenyl-diphosphatase from Idiomarina loihiensis (strain ATCC BAA-735 / DSM 15497 / L2-TR).